The sequence spans 81 residues: Sulfur carrier protein TusA (81 aa).

Cys-19 functions as the Cysteine persulfide intermediate in the catalytic mechanism.

It belongs to the sulfur carrier protein TusA family. In terms of assembly, interacts with IscS.

Its subcellular location is the cytoplasm. It functions in the pathway tRNA modification. Its function is as follows. Sulfur carrier protein involved in sulfur trafficking in the cell. Part of a sulfur-relay system required for 2-thiolation during synthesis of 2-thiouridine of the modified wobble base 5-methylaminomethyl-2-thiouridine (mnm(5)s(2)U) in tRNA. Interacts with IscS and stimulates its cysteine desulfurase activity. Accepts an activated sulfur from IscS, which is then transferred to TusD, and thus determines the direction of sulfur flow from IscS to 2-thiouridine formation. Also appears to be involved in sulfur transfer for the biosynthesis of molybdopterin. This chain is Sulfur carrier protein TusA, found in Citrobacter koseri (strain ATCC BAA-895 / CDC 4225-83 / SGSC4696).